The sequence spans 664 residues: Bifunctional 3-dehydroquinate synthase/phosphatase (664 aa).

The tract at residues 1 to 352 is 3-dehydroquinate synthase; that stretch reads MKKIFDDIYV…KIIDKYKNNF (352 aa). Residues 61–66, 95–99, 119–120, K132, K141, and 159–162 contribute to the NAD(+) site; these read DGEEYK, GVICD, TS, and FLKT. E174, H238, and H255 together coordinate Zn(2+). The segment at 353–664 is GPPA/PPX; that stretch reads LRASIDIGTN…GAILEGVENK (312 aa).

This sequence in the N-terminal section; belongs to the sugar phosphate cyclases superfamily. Dehydroquinate synthase family. It in the C-terminal section; belongs to the GppA/Ppx family. As to quaternary structure, monomer. Requires NAD(+) as cofactor. Co(2+) is required as a cofactor. The cofactor is Zn(2+).

It is found in the cytoplasm. It carries out the reaction 7-phospho-2-dehydro-3-deoxy-D-arabino-heptonate = 3-dehydroquinate + phosphate. It functions in the pathway metabolic intermediate biosynthesis; chorismate biosynthesis; chorismate from D-erythrose 4-phosphate and phosphoenolpyruvate: step 2/7. The polypeptide is Bifunctional 3-dehydroquinate synthase/phosphatase (aroB) (Fusobacterium nucleatum subsp. nucleatum (strain ATCC 25586 / DSM 15643 / BCRC 10681 / CIP 101130 / JCM 8532 / KCTC 2640 / LMG 13131 / VPI 4355)).